The following is a 150-amino-acid chain: Troponin C, isoform 2A (150 aa).

N-acetylmethionine is present on M1. EF-hand domains are found at residues 7–42 (EQIGALQKAFDSFDTDSKGFITPETVGVILRMMGVK), 43–78 (ISEKNLQEVIAETDEDGSGELEFEEFVELAAKFLIE), 83–118 (ALKTELREAFRVYDKEGNGYITTDVLKEILRELDNR), and 119–150 (LTEEDLDSIIEEVDEDGSGTLDFNEFMEMMNG). Ca(2+)-binding residues include D56, D58, S60, E62, and E67. Residues D132, D134, S136, T138, and E143 each coordinate Ca(2+).

This sequence belongs to the troponin C family.

In terms of biological role, troponin is the central regulatory protein of striated muscle contraction. Tn consists of three components: Tn-I which is the inhibitor of actomyosin ATPase, Tn-T which contains the binding site for tropomyosin and Tn-C. The binding of calcium to Tn-C abolishes the inhibitory action of Tn on actin filaments. The polypeptide is Troponin C, isoform 2A (Homarus americanus (American lobster)).